A 431-amino-acid chain; its full sequence is Tyrosine--tRNA ligase (431 aa).

Position 34 (Y34) interacts with L-tyrosine. The short motif at 39–48 (PTADSLHIGH) is the 'HIGH' region element. Positions 171 and 175 each coordinate L-tyrosine. Residues 231–235 (KFGKT) carry the 'KMSKS' region motif. K234 contacts ATP. One can recognise an S4 RNA-binding domain in the interval 353–422 (INVVEALVKT…GKYTILRRGK (70 aa)).

Belongs to the class-I aminoacyl-tRNA synthetase family. TyrS type 1 subfamily. Homodimer.

The protein resides in the cytoplasm. It carries out the reaction tRNA(Tyr) + L-tyrosine + ATP = L-tyrosyl-tRNA(Tyr) + AMP + diphosphate + H(+). Catalyzes the attachment of tyrosine to tRNA(Tyr) in a two-step reaction: tyrosine is first activated by ATP to form Tyr-AMP and then transferred to the acceptor end of tRNA(Tyr). The polypeptide is Tyrosine--tRNA ligase (Neisseria meningitidis serogroup C (strain 053442)).